The sequence spans 412 residues: Protein translocase subunit SecY (412 aa).

Transmembrane regions (helical) follow at residues 17–37, 58–78, 117–137, 143–163, 170–190, 251–271, 293–313, 350–370, and 372–392; these read IFLT…PVPG, IFSG…VPYI, ALGW…PYVF, FVVQ…WFSE, IGNG…PKLI, VMPI…GQVI, YLIF…SLII, TFLG…IENI, and SIST…GVAI.

The protein belongs to the SecY/SEC61-alpha family. Component of the plastid Sec protein translocase complex, which is composed of at least SecY and SecE.

The protein resides in the plastid. Its subcellular location is the chloroplast thylakoid membrane. In terms of biological role, the central subunit of the protein translocation channel SecYE. Consists of two halves formed by TMs 1-5 and 6-10. These two domains form a lateral gate at the front which open onto the bilayer between TMs 2 and 7, and are clamped together by SecE at the back. The channel is closed by both a pore ring composed of hydrophobic SecY resides and a short helix (helix 2A) on the extracellular side of the membrane which forms a plug. In Pyrenomonas salina, this protein is Protein translocase subunit SecY.